The sequence spans 146 residues: Large ribosomal subunit protein uL16c (146 aa).

The protein belongs to the universal ribosomal protein uL16 family. In terms of assembly, part of the 50S ribosomal subunit.

The protein localises to the plastid. It localises to the chloroplast. This Angiopteris evecta (Mule's foot fern) protein is Large ribosomal subunit protein uL16c.